A 398-amino-acid chain; its full sequence is Chalcone synthase (398 aa).

The active site involves Cys167.

This sequence belongs to the thiolase-like superfamily. Chalcone/stilbene synthases family.

The catalysed reaction is (E)-4-coumaroyl-CoA + 3 malonyl-CoA + 3 H(+) = 2',4,4',6'-tetrahydroxychalcone + 3 CO2 + 4 CoA. It participates in secondary metabolite biosynthesis; flavonoid biosynthesis. The primary product of this enzyme is 4,2',4',6'-tetrahydroxychalcone (also termed naringenin-chalcone or chalcone) which can under specific conditions spontaneously isomerize into naringenin. This chain is Chalcone synthase (CHS), found in Callistephus chinensis (China aster).